Reading from the N-terminus, the 215-residue chain is Cytochrome c biogenesis ATP-binding export protein CcmA (215 aa).

The ABC transporter domain maps to 3-211; it reads LTAENLAARR…KMTGFAGVDR (209 aa). 35–42 contributes to the ATP binding site; sequence GRNGSGKS.

Belongs to the ABC transporter superfamily. CcmA exporter (TC 3.A.1.107) family. As to quaternary structure, the complex is composed of two ATP-binding proteins (CcmA) and two transmembrane proteins (CcmB).

It localises to the cell inner membrane. It catalyses the reaction heme b(in) + ATP + H2O = heme b(out) + ADP + phosphate + H(+). In terms of biological role, part of the ABC transporter complex CcmAB involved in the biogenesis of c-type cytochromes; once thought to export heme, this seems not to be the case, but its exact role is uncertain. Responsible for energy coupling to the transport system. In Rhizobium etli (strain ATCC 51251 / DSM 11541 / JCM 21823 / NBRC 15573 / CFN 42), this protein is Cytochrome c biogenesis ATP-binding export protein CcmA.